We begin with the raw amino-acid sequence, 622 residues long: Apical membrane antigen 1 (622 aa).

Residues 1–24 form the signal peptide; sequence MRKLYCVLLLSAFEFTYMINFGRG. Over 25-546 the chain is Extracellular; that stretch reads QNYWEHPYQN…EHKPTYDNMK (522 aa). Cystine bridges form between Cys-149-Cys-302, Cys-217-Cys-247, Cys-263-Cys-275, Cys-320-Cys-418, and Cys-337-Cys-409. Residues Asn-286, Asn-371, Asn-421, Asn-422, and Asn-499 are each glycosylated (N-linked (GlcNAc...) asparagine). 3 cysteine pairs are disulfide-bonded: Cys-443–Cys-502, Cys-490–Cys-507, and Cys-492–Cys-509. The chain crosses the membrane as a helical span at residues 547–567; the sequence is IIIASSAAVAVLATILMVYLY. The Cytoplasmic portion of the chain corresponds to 568 to 622; sequence KRKGNAEKYDKMDEPQDYGKSTSRNDEMLDPEASFWGEEKRASHTTPVLMEKPYY. Positions 577-607 are disordered; the sequence is DKMDEPQDYGKSTSRNDEMLDPEASFWGEEK.

It belongs to the apicomplexan parasites AMA1 family.

The protein localises to the membrane. Involved in parasite invasion of erythrocytes. The polypeptide is Apical membrane antigen 1 (AMA-1) (Plasmodium falciparum (isolate thtn / Thailand)).